Consider the following 402-residue polypeptide: S-adenosylmethionine synthase (402 aa).

Residue 137-142 (GQGSAD) participates in ATP binding.

This sequence belongs to the AdoMet synthase 2 family. The cofactor is Mg(2+).

It carries out the reaction L-methionine + ATP + H2O = S-adenosyl-L-methionine + phosphate + diphosphate. It participates in amino-acid biosynthesis; S-adenosyl-L-methionine biosynthesis; S-adenosyl-L-methionine from L-methionine: step 1/1. Its function is as follows. Catalyzes the formation of S-adenosylmethionine from methionine and ATP. The protein is S-adenosylmethionine synthase of Pyrobaculum calidifontis (strain DSM 21063 / JCM 11548 / VA1).